The following is a 360-amino-acid chain: Probable dual-specificity RNA methyltransferase RlmN (360 aa).

The active-site Proton acceptor is the Glu-97. One can recognise a Radical SAM core domain in the interval 103-330 (DGDRLTFCIS…TAVRRSRGLD (228 aa)). A disulfide bond links Cys-110 and Cys-335. Positions 117, 121, and 124 each coordinate [4Fe-4S] cluster. Residues 165–166 (GE), Ser-197, 220–222 (SIH), and His-292 contribute to the S-adenosyl-L-methionine site. Cys-335 acts as the S-methylcysteine intermediate in catalysis.

The protein belongs to the radical SAM superfamily. RlmN family. Requires [4Fe-4S] cluster as cofactor.

Its subcellular location is the cytoplasm. The catalysed reaction is adenosine(2503) in 23S rRNA + 2 reduced [2Fe-2S]-[ferredoxin] + 2 S-adenosyl-L-methionine = 2-methyladenosine(2503) in 23S rRNA + 5'-deoxyadenosine + L-methionine + 2 oxidized [2Fe-2S]-[ferredoxin] + S-adenosyl-L-homocysteine. It carries out the reaction adenosine(37) in tRNA + 2 reduced [2Fe-2S]-[ferredoxin] + 2 S-adenosyl-L-methionine = 2-methyladenosine(37) in tRNA + 5'-deoxyadenosine + L-methionine + 2 oxidized [2Fe-2S]-[ferredoxin] + S-adenosyl-L-homocysteine. In terms of biological role, specifically methylates position 2 of adenine 2503 in 23S rRNA and position 2 of adenine 37 in tRNAs. The chain is Probable dual-specificity RNA methyltransferase RlmN from Gemmatimonas aurantiaca (strain DSM 14586 / JCM 11422 / NBRC 100505 / T-27).